We begin with the raw amino-acid sequence, 307 residues long: UDP-N-acetylenolpyruvoylglucosamine reductase (307 aa).

The 165-residue stretch at 34–198 folds into the FAD-binding PCMH-type domain; that stretch reads TGGNADFYLS…LEAAFTLEPG (165 aa). R177 is a catalytic residue. The active-site Proton donor is S227. E297 is a catalytic residue.

The protein belongs to the MurB family. It depends on FAD as a cofactor.

The protein resides in the cytoplasm. It catalyses the reaction UDP-N-acetyl-alpha-D-muramate + NADP(+) = UDP-N-acetyl-3-O-(1-carboxyvinyl)-alpha-D-glucosamine + NADPH + H(+). Its pathway is cell wall biogenesis; peptidoglycan biosynthesis. Its function is as follows. Cell wall formation. The polypeptide is UDP-N-acetylenolpyruvoylglucosamine reductase (Staphylococcus haemolyticus (strain JCSC1435)).